Consider the following 24-residue polypeptide: Homotarsinin (24 aa).

At R24 the chain carries Arginine amide.

Homodimer; disulfide-linked. In terms of tissue distribution, expressed by the skin glands.

Its subcellular location is the secreted. Functionally, antimicrobial peptide. Active against Gram-negative bacteria E.coli ATCC 25922 (MIC=1.5 uM) and P.aeruginosa ATTC 27853 (MIC=23.2 uM) and against Gram-positive bacterium S.aureus ATCC 29313 (MIC=11.6 uM). Has no hemolytic activity. Associates with and disrupts membranes in vitro. The polypeptide is Homotarsinin (Phyllomedusa tarsius (Brownbelly leaf frog)).